Consider the following 244-residue polypeptide: Isoprenyl transferase (244 aa).

The active site involves Asp-23. A Mg(2+)-binding site is contributed by Asp-23. Substrate is bound by residues 24 to 27 (GNGR), Trp-28, Arg-36, His-40, and 68 to 70 (STE). Asn-71 functions as the Proton acceptor in the catalytic mechanism. Substrate is bound by residues Trp-72, Arg-74, Arg-191, and 197-199 (RMS). Glu-210 is a binding site for Mg(2+).

The protein belongs to the UPP synthase family. Homodimer. It depends on Mg(2+) as a cofactor.

Catalyzes the condensation of isopentenyl diphosphate (IPP) with allylic pyrophosphates generating different type of terpenoids. In Lactococcus lactis subsp. lactis (strain IL1403) (Streptococcus lactis), this protein is Isoprenyl transferase.